We begin with the raw amino-acid sequence, 329 residues long: Diaminopimelate epimerase (329 aa).

The substrate site is built by Asn-14 and Asn-73. The active-site Proton donor is Cys-82. Residues 83–84 (GN), Asn-170, Asn-206, and 224–225 (ER) contribute to the substrate site. Cys-233 serves as the catalytic Proton acceptor. 234–235 (GT) is a substrate binding site.

The protein belongs to the diaminopimelate epimerase family. Homodimer.

The protein localises to the cytoplasm. The catalysed reaction is (2S,6S)-2,6-diaminopimelate = meso-2,6-diaminopimelate. It participates in amino-acid biosynthesis; L-lysine biosynthesis via DAP pathway; DL-2,6-diaminopimelate from LL-2,6-diaminopimelate: step 1/1. Its function is as follows. Catalyzes the stereoinversion of LL-2,6-diaminopimelate (L,L-DAP) to meso-diaminopimelate (meso-DAP), a precursor of L-lysine and an essential component of the bacterial peptidoglycan. The protein is Diaminopimelate epimerase of Listeria innocua serovar 6a (strain ATCC BAA-680 / CLIP 11262).